The following is a 297-amino-acid chain: MSDSKKSATVVMPRWRQYWVLTKPRVTQLAVFCAVIGMFLATPGMVPYPVLFGGIVGIWLLAGAAFAVNCLIEQAVDAKMKRTSWRPSATGEVTPLHIIIFSIILGSLGMIILWNFCNPLTMWLTLATFVGYAVIYTWLLKPATPQNIVIGGLSGAMPPALGWAAVTNTLSAEAWHLVLIIFVWTPPHFWALALYRRDDYVQSGLPMLPVTHGERFTLLNIVLYTLILIAATMLPYIYGMSGMVYLISAIILGLLFLAYVVALFISYSDALAKKTFRFSITYLSLLFAALLVDHYFL.

9 helical membrane passes run 26–46 (VTQL…PGMV), 48–68 (YPVL…AFAV), 96–116 (LHII…LWNF), 120–140 (LTMW…TWLL), 147–167 (NIVI…AAVT), 174–194 (AWHL…ALAL), 218–238 (LLNI…PYIY), 245–265 (YLIS…ALFI), and 276–296 (FRFS…DHYF).

Belongs to the UbiA prenyltransferase family. Protoheme IX farnesyltransferase subfamily.

Its subcellular location is the cell inner membrane. The catalysed reaction is heme b + (2E,6E)-farnesyl diphosphate + H2O = Fe(II)-heme o + diphosphate. Its pathway is porphyrin-containing compound metabolism; heme O biosynthesis; heme O from protoheme: step 1/1. In terms of biological role, converts heme B (protoheme IX) to heme O by substitution of the vinyl group on carbon 2 of heme B porphyrin ring with a hydroxyethyl farnesyl side group. This is Protoheme IX farnesyltransferase from Polynucleobacter necessarius subsp. necessarius (strain STIR1).